The following is a 466-amino-acid chain: Asparagine--tRNA ligase (466 aa).

It belongs to the class-II aminoacyl-tRNA synthetase family. As to quaternary structure, homodimer.

The protein localises to the cytoplasm. It catalyses the reaction tRNA(Asn) + L-asparagine + ATP = L-asparaginyl-tRNA(Asn) + AMP + diphosphate + H(+). The protein is Asparagine--tRNA ligase of Shewanella sp. (strain MR-4).